The primary structure comprises 304 residues: Ornithine carbamoyltransferase (304 aa).

Residues serine 53 to threonine 56, glutamine 80, arginine 104, and histidine 131 to glutamine 134 contribute to the carbamoyl phosphate site. L-ornithine is bound by residues asparagine 162, aspartate 219, and serine 223 to methionine 224. Carbamoyl phosphate is bound by residues cysteine 259–leucine 260 and arginine 287.

The protein belongs to the aspartate/ornithine carbamoyltransferase superfamily. OTCase family.

The protein resides in the cytoplasm. It catalyses the reaction carbamoyl phosphate + L-ornithine = L-citrulline + phosphate + H(+). The protein operates within amino-acid biosynthesis; L-arginine biosynthesis; L-arginine from L-ornithine and carbamoyl phosphate: step 1/3. Reversibly catalyzes the transfer of the carbamoyl group from carbamoyl phosphate (CP) to the N(epsilon) atom of ornithine (ORN) to produce L-citrulline. The sequence is that of Ornithine carbamoyltransferase from Nitrosococcus oceani (strain ATCC 19707 / BCRC 17464 / JCM 30415 / NCIMB 11848 / C-107).